Reading from the N-terminus, the 558-residue chain is MLGMKPLGFIGNGLTSALVDNGSIVWLTFPRFDSPSVFGKLLDDNAGEFSIRPVEDKFKVSQSYLVPNVLSTTFKSSNGKAEIVDLMPIGEKAIIRKVRTEIPLSFKIIPMFNYGLYRPIIRRKDDGIQFLNPVSRECLSLLSDVPTDEIKPPGTTLYLVYSSDCAYGPLDKGKQLENDLENSFNLTIDYWKDKIRSNDEVWRTSVGVLLGLIYSPSGSSIAAATTSLPEAVGDSRNWDYRFVWVRDSSMISEALLYSGYVVEARRILNFMLALVNFTAKPLLHPLYAVDGSDPPPEIEIPWLSGYMNSRPVRVGNAAASQIQLDIEGFLVDAIYKYYKYTSDRVFVEENWDKIKYIGDWVSKNWMLKDAGMWEDRGDPKHYTHSKVMMWVALDRIEKIMNVKIHEKDEIKEWVMRNCVKDGSFVRSSDSNDVDANLLTLPLYDFIDVKDPIFLKTLKRIEDELYVDGFVKRYSQDFMGEAKHPFALATIWLARVYIRLGRKERAMELLDKVLKPSGTLYLIGEHIDVENMEYTGNYPQAFVHAQLLLALKEVKGLST.

This sequence belongs to the glycosyl hydrolase 15 family.

The enzyme catalyses alpha,alpha-trehalose + H2O = alpha-D-glucose + beta-D-glucose. It functions in the pathway glycan degradation; trehalose degradation; D-glucose from alpha,alpha-trehalose: step 1/1. Functionally, catalyzes the hydrolysis of alpha,alpha-trehalose into two molecules of D-glucose. This is Trehalase 1 (treH1) from Sulfolobus acidocaldarius (strain ATCC 33909 / DSM 639 / JCM 8929 / NBRC 15157 / NCIMB 11770).